We begin with the raw amino-acid sequence, 436 residues long: Adenylosuccinate synthetase (436 aa).

Residues G12–K18 and G40–T42 each bind GTP. Residue D13 is the Proton acceptor of the active site. 2 residues coordinate Mg(2+): D13 and G40. IMP-binding positions include D13–K16, N38–H41, T128, R142, Q223, T238, and R302. H41 acts as the Proton donor in catalysis. T298 to R304 provides a ligand contact to substrate. GTP-binding positions include R304, K330–D332, and S412–G414.

It belongs to the adenylosuccinate synthetase family. Homodimer. Mg(2+) is required as a cofactor.

The protein localises to the cytoplasm. The enzyme catalyses IMP + L-aspartate + GTP = N(6)-(1,2-dicarboxyethyl)-AMP + GDP + phosphate + 2 H(+). It functions in the pathway purine metabolism; AMP biosynthesis via de novo pathway; AMP from IMP: step 1/2. Functionally, plays an important role in the de novo pathway of purine nucleotide biosynthesis. Catalyzes the first committed step in the biosynthesis of AMP from IMP. This chain is Adenylosuccinate synthetase, found in Prochlorococcus marinus (strain MIT 9301).